The chain runs to 256 residues: tRNA-cytidine(32) 2-sulfurtransferase (256 aa).

Residues 35 to 40 (SGGKDS) carry the PP-loop motif motif. Residues Cys-110, Cys-113, and Cys-201 each contribute to the [4Fe-4S] cluster site.

This sequence belongs to the TtcA family. Homodimer. Requires Mg(2+) as cofactor. The cofactor is [4Fe-4S] cluster.

It localises to the cytoplasm. It carries out the reaction cytidine(32) in tRNA + S-sulfanyl-L-cysteinyl-[cysteine desulfurase] + AH2 + ATP = 2-thiocytidine(32) in tRNA + L-cysteinyl-[cysteine desulfurase] + A + AMP + diphosphate + H(+). The protein operates within tRNA modification. Functionally, catalyzes the ATP-dependent 2-thiolation of cytidine in position 32 of tRNA, to form 2-thiocytidine (s(2)C32). The sulfur atoms are provided by the cysteine/cysteine desulfurase (IscS) system. This Coxiella burnetii (strain RSA 331 / Henzerling II) protein is tRNA-cytidine(32) 2-sulfurtransferase.